Here is a 168-residue protein sequence, read N- to C-terminus: Peptide deformylase 1 (168 aa).

C92 and H134 together coordinate Fe cation. Residue E135 is part of the active site. H138 provides a ligand contact to Fe cation.

This sequence belongs to the polypeptide deformylase family. Requires Fe(2+) as cofactor.

It catalyses the reaction N-terminal N-formyl-L-methionyl-[peptide] + H2O = N-terminal L-methionyl-[peptide] + formate. Functionally, removes the formyl group from the N-terminal Met of newly synthesized proteins. Requires at least a dipeptide for an efficient rate of reaction. N-terminal L-methionine is a prerequisite for activity but the enzyme has broad specificity at other positions. This Pseudomonas syringae pv. tomato (strain ATCC BAA-871 / DC3000) protein is Peptide deformylase 1.